A 1630-amino-acid chain; its full sequence is Histone transcription regulator 3 homolog (1630 aa).

The stretch at 8–42 (NAASEDLDKEKRTLEIRIEEAVQIYQNALSAQKQG) is one TPR 1 repeat. Positions 325–347 (KDIVPPPSDNLPKPQLLKRPIDD) are disordered. A TPR 2 repeat occupies 1230–1263 (WRALYMLGKACRKCGDMENALVHFEAAAALAPTK).

This sequence belongs to the HIR3 family. As to quaternary structure, interacts with hip1 and slm9.

The protein localises to the nucleus. Has a role in a nucleosome assembly pathway that is required for the integrity of heterochromatin and proper chromosome segregation. Required for transcriptional silencing in the outer repeat (otr) region of centromeric repeats and the Tf2 long terminal repeat retrotransposons. The chain is Histone transcription regulator 3 homolog (hip3) from Schizosaccharomyces pombe (strain 972 / ATCC 24843) (Fission yeast).